The chain runs to 333 residues: Trans-enoyl reductase apdC (333 aa).

45–48 (FDAK) is an NADP(+) binding site. Residue 131-138 (VGLATVGM) coordinates substrate. NADP(+) is bound by residues 167-170 (SPHN), Y185, and 232-233 (LD). Substrate is bound at residue 252–256 (SVTMY). 321-322 (VS) lines the NADP(+) pocket.

This sequence belongs to the zinc-containing alcohol dehydrogenase family. In terms of assembly, monomer.

It functions in the pathway secondary metabolite biosynthesis. In terms of biological role, trans-enoyl reductase; part of the gene cluster that mediates the biosynthesis of aspyridones. The polyketide-amino acid backbone preaspyridone A is first assembled by the PKS-NRPS hybrid apdA. The assembly of preaspyridone A is initiated by loading of malonyl-CoA onto apdA, followed by decarboxylation to yield the acetyl starter unit. The growing polyketide chain then elongates into a tetraketide. The adpA PKS module catalyzes three Claisen condensations, as well as beta-keto processing and methylation. Alpha-methylation step during polyketide synthesis is a prerequisite and a key checkpoint for chain transfer between PKS and NRPS modules. The downstream NRPS module contains the condensation (C), adenylation (A), and thiolation (T) domains and catalyzes the incorporation of tyrosine via the formation of the L-tyrosinyl-thioester and the amide linkage between L-tyrosinyl-thioester and the tetraketide. The bimodular assembly line is terminated with a reductase (R) domain that facilitates formation and release of the tetramic acid product. Because apdA lacks a designated enoylreductase (ER) domain, the required activity is provided the enoyl reductase apdC. ApdC appears to operate with different stereoselectivity in different PKS cycle. Combined with apdC, apdA is proposed to synthesize preaspyridone A via about 20 enzymatic steps. A number of oxidative steps performed successively by the cytochrome P450 monooxygenases apdE and apdB are required for the conversion of preaspyridone A to aspyridone A. The cytochrome P450 monooxygenase apdE is responsible for the oxidative dephenylation of preaspyridone A. Finally, the predicted FAD-dependent monooxygenase apdD and the acyl-CoA dehydrogenase apdG may be involved in the transformation of aspyridone A into aspyridone B. The polypeptide is Trans-enoyl reductase apdC (Emericella nidulans (strain FGSC A4 / ATCC 38163 / CBS 112.46 / NRRL 194 / M139) (Aspergillus nidulans)).